A 534-amino-acid chain; its full sequence is Chaperonin GroEL 3 (534 aa).

Residues 31–34 (TLGP), Gly416, 479–481 (NAL), and Asp495 contribute to the ATP site.

Belongs to the chaperonin (HSP60) family. As to quaternary structure, forms a cylinder of 14 subunits composed of two heptameric rings stacked back-to-back. Interacts with the co-chaperonin GroES.

Its subcellular location is the cytoplasm. It carries out the reaction ATP + H2O + a folded polypeptide = ADP + phosphate + an unfolded polypeptide.. In terms of biological role, together with its co-chaperonin GroES, plays an essential role in assisting protein folding. The GroEL-GroES system forms a nano-cage that allows encapsulation of the non-native substrate proteins and provides a physical environment optimized to promote and accelerate protein folding. The polypeptide is Chaperonin GroEL 3 (Protochlamydia amoebophila (strain UWE25)).